The sequence spans 440 residues: Trigger factor (440 aa).

The region spanning 163-248 (NDTVSINFKG…INSIKEKVLP (86 aa)) is the PPIase FKBP-type domain.

Belongs to the FKBP-type PPIase family. Tig subfamily.

It localises to the cytoplasm. The catalysed reaction is [protein]-peptidylproline (omega=180) = [protein]-peptidylproline (omega=0). Its function is as follows. Involved in protein export. Acts as a chaperone by maintaining the newly synthesized protein in an open conformation. Functions as a peptidyl-prolyl cis-trans isomerase. In Finegoldia magna (strain ATCC 29328 / DSM 20472 / WAL 2508) (Peptostreptococcus magnus), this protein is Trigger factor.